A 275-amino-acid polypeptide reads, in one-letter code: Large ribosomal subunit protein uL2 (275 aa).

The segment at 221–275 (VRGVAMNPVDHPMGGGEGKSSGGRHPCSPWGQQSKGVRTRNNKRTDQFIVKRRSK) is disordered.

This sequence belongs to the universal ribosomal protein uL2 family. Part of the 50S ribosomal subunit. Forms a bridge to the 30S subunit in the 70S ribosome.

Functionally, one of the primary rRNA binding proteins. Required for association of the 30S and 50S subunits to form the 70S ribosome, for tRNA binding and peptide bond formation. It has been suggested to have peptidyltransferase activity; this is somewhat controversial. Makes several contacts with the 16S rRNA in the 70S ribosome. The chain is Large ribosomal subunit protein uL2 from Desulfosudis oleivorans (strain DSM 6200 / JCM 39069 / Hxd3) (Desulfococcus oleovorans).